The primary structure comprises 367 residues: MTSRNYLLLTPGPLTTSRTVKEAMLFDSCTWDDDYNIGVVEQIRQQLTALATASEGYTSVLLQGSGSYAVEAVLGSALGPQDKVLIVSNGAYGARMVEMAGLMGIAHHAYDCGEVARPDVQAIDAILNADPTISHIAMVHSETTTGMLNPIDEVGALAHRYGKTYIVDAMSSFGGIPMDIAALHIDYLISSANKCIQGVPGFAFVIAREQKLAACKGHSRSLSLDLYAQWRCMEDNHGKWRFTSPTHTVLAFAQALKELAKEGGVAARHQRYQQNQRSLVAGMRALGFNTLLDDELHSPIITAFYSPEDPQYRFSEFYRRLKEQGFVIYPGKVSQSDCFRIGNIGEVYAADITALLTAIRTAMYWTK.

Residues 65 to 67 (SGS), tyrosine 92, threonine 143, and aspartate 168 each bind pyridoxal 5'-phosphate. Position 194 is an N6-(pyridoxal phosphate)lysine (lysine 194). Threonine 243 contacts pyridoxal 5'-phosphate.

It belongs to the class-V pyridoxal-phosphate-dependent aminotransferase family. PhnW subfamily. In terms of assembly, homodimer. Pyridoxal 5'-phosphate is required as a cofactor.

The catalysed reaction is (2-aminoethyl)phosphonate + pyruvate = phosphonoacetaldehyde + L-alanine. Involved in phosphonate degradation. This chain is 2-aminoethylphosphonate--pyruvate transaminase (phnW), found in Salmonella typhimurium (strain LT2 / SGSC1412 / ATCC 700720).